We begin with the raw amino-acid sequence, 147 residues long: Large ribosomal subunit protein uL13 (147 aa).

This sequence belongs to the universal ribosomal protein uL13 family. As to quaternary structure, part of the 50S ribosomal subunit.

Functionally, this protein is one of the early assembly proteins of the 50S ribosomal subunit, although it is not seen to bind rRNA by itself. It is important during the early stages of 50S assembly. This is Large ribosomal subunit protein uL13 from Leuconostoc mesenteroides subsp. mesenteroides (strain ATCC 8293 / DSM 20343 / BCRC 11652 / CCM 1803 / JCM 6124 / NCDO 523 / NBRC 100496 / NCIMB 8023 / NCTC 12954 / NRRL B-1118 / 37Y).